The chain runs to 860 residues: Leucine-rich repeat and death domain-containing protein 1 (860 aa).

The tract at residues 1 to 103 is disordered; sequence MSEKEGMSEV…TGTSQSLSSL (103 aa). The segment covering 50–72 has biased composition (polar residues); sequence KSSNQIYETHPRQNTLESTSSSG. Residues 90–103 show a composition bias toward low complexity; it reads TSTRTGTSQSLSSL. LRR repeat units lie at residues 139–163, 164–186, 187–210, 211–233, 235–256, 257–279, 281–302, 303–325, 326–348, 350–371, 372–394, 396–417, 419–440, 441–463, 465–486, 487–510, 512–532, 533–555, 557–578, 579–601, 603–624, 627–650, 651–673, 675–696, 697–719, and 721–742; these read LGADNFTVNLEAKGLQEFPKDILKI, KYVKYLYLDKNQIKTFQGADSGD, LLGLEILSLQENGLSSLPSEIQLL, HNLRILNVSHNHISHIPKEISQL, NIRQLFFYNNYIENFPSDLECL, GNLEILSLGKNKLRHIPDTLPSL, TLRVLNLEYNQLTTFPKALCFL, PKLISLDLTGNLISSLPKEIREL, KNLETLLMDHNKLTFLAVEIFQL, KIKELQLADNKLEVISHKIENF, RELRILILDKNLLKNIPEKISCC, MLECLSLSDNKLTELPKYIHKL, NLRKLHVNRNNMVKITDCISHL, NNICSLEFSGNIITDVPIEIKNC, KIIKIELSYNKIMYFPLGLCAL, DSLYYLSVNGNYISEIPVDISFSK, LLHLELSENKLLIFSEHFCSL, INLKYLDLGKNQIKKIPASISNM, SLHVLILCCNKFETFPRELCTL, ENLQVLDLSENQLQKISSDICNL, GIQKLNFSSNQFIHFPIELCQL, LEQLNISQIKGRKLTRLPGELSNM, TQLKELDISNNAIREIPRNIGEL, NLVSLHAYNNQISYLPPSLLSL, NDLQQLNLSGNNLTALPSAIYNI, and SLKEINFDDNPLLRPPVEICKG. In terms of domain architecture, Death spans 764 to 852; that stretch reads EKIFKIVANN…EIMDKITALN (89 aa). One copy of the LRR 27 repeat lies at 856–860; that stretch reads RAIKF.

This Homo sapiens (Human) protein is Leucine-rich repeat and death domain-containing protein 1 (LRRD1).